Consider the following 341-residue polypeptide: Limbic system-associated membrane protein (341 aa).

The signal sequence occupies residues 1–28; it reads MVGRVQPDRKQLPLVLLRLLCLLPTGLP. 3 consecutive Ig-like domains span residues 29-122, 132-214, and 219-304; these read VRSV…PKTS, PKIS…VKVT, and PTIT…ASLV. N-linked (GlcNAc...) asparagine glycosylation is found at Asn40 and Asn66. Cys53 and Cys111 form a disulfide bridge. Tyr94 carries the phosphotyrosine modification. N-linked (GlcNAc...) asparagine glycosylation is found at Asn136 and Asn148. 2 cysteine pairs are disulfide-bonded: Cys153–Cys197 and Cys239–Cys290. Residues Asn279, Asn287, and Asn300 are each glycosylated (N-linked (GlcNAc...) asparagine).

It belongs to the immunoglobulin superfamily. IgLON family.

It localises to the cell membrane. Mediates selective neuronal growth and axon targeting. Contributes to the guidance of developing axons and remodeling of mature circuits in the limbic system. Essential for normal growth of the hippocampal mossy fiber projection. The sequence is that of Limbic system-associated membrane protein (Lsamp) from Mus musculus (Mouse).